The following is a 255-amino-acid chain: MRHPLVMGNWKLNGSRHMVNELVANLRKELAGVAGCDVAIAPPEMYIDLAKRAAAGSHIMLGAQNVDLNLSGAFTGETSAEMLKDIGAQYIIIGHSERRTYHKESDELIAKKFAVLKEQGLTPVLCIGETEAENEAGKTEEVCARQIDAVLKTQGAAAFEGAVIAYEPVWAIGTGKSATPAQAQAVHKFIRDHIAKADAKIAEQVIIQYGGSVNASNAAELFAQPDIDGALVGGASLKADAFAVIVKAAEAAKQA.

9-11 (NWK) is a binding site for substrate. Residue His95 is the Electrophile of the active site. Glu167 acts as the Proton acceptor in catalysis. Substrate-binding positions include Gly173, Ser212, and 233 to 234 (GG).

This sequence belongs to the triosephosphate isomerase family. As to quaternary structure, homodimer.

The protein resides in the cytoplasm. It carries out the reaction D-glyceraldehyde 3-phosphate = dihydroxyacetone phosphate. It participates in carbohydrate biosynthesis; gluconeogenesis. The protein operates within carbohydrate degradation; glycolysis; D-glyceraldehyde 3-phosphate from glycerone phosphate: step 1/1. Involved in the gluconeogenesis. Catalyzes stereospecifically the conversion of dihydroxyacetone phosphate (DHAP) to D-glyceraldehyde-3-phosphate (G3P). This Salmonella dublin (strain CT_02021853) protein is Triosephosphate isomerase.